A 962-amino-acid chain; its full sequence is Protease 3 (962 aa).

An N-terminal signal peptide occupies residues 1–23; that stretch reads MPRSTWFKALLLLVALWGPAVQA. Residue His-88 coordinates Zn(2+). Glu-91 functions as the Proton acceptor in the catalytic mechanism. Zn(2+) contacts are provided by His-92 and Glu-169.

It belongs to the peptidase M16 family. As to quaternary structure, monomer. The cofactor is Zn(2+).

It localises to the periplasm. The catalysed reaction is Preferential cleavage of 16-Tyr-|-Leu-17 and 25-Phe-|-Tyr-26 bonds of oxidized insulin B chain. Also acts on other substrates of Mw less than 7 kDa such as insulin and glucagon.. Functionally, endopeptidase that degrades small peptides of less than 7 kDa, such as glucagon and insulin. This chain is Protease 3 (ptrA), found in Salmonella typhimurium (strain LT2 / SGSC1412 / ATCC 700720).